A 350-amino-acid polypeptide reads, in one-letter code: Uroporphyrinogen decarboxylase (350 aa).

Residues 28-32, Phe47, Asp78, Tyr155, Ser210, and His325 each bind substrate; that span reads RQAGR.

It belongs to the uroporphyrinogen decarboxylase family. Homodimer.

The protein localises to the cytoplasm. The catalysed reaction is uroporphyrinogen III + 4 H(+) = coproporphyrinogen III + 4 CO2. Its pathway is porphyrin-containing compound metabolism; protoporphyrin-IX biosynthesis; coproporphyrinogen-III from 5-aminolevulinate: step 4/4. Its function is as follows. Catalyzes the decarboxylation of four acetate groups of uroporphyrinogen-III to yield coproporphyrinogen-III. The protein is Uroporphyrinogen decarboxylase of Synechocystis sp. (strain ATCC 27184 / PCC 6803 / Kazusa).